The primary structure comprises 206 residues: Na(+)-translocating NADH-quinone reductase subunit E (206 aa).

Helical transmembrane passes span 12-32 (AVFV…FLAV), 36-56 (ISSA…TVPV), 85-105 (FLGL…LEMF), 118-138 (GVFL…LFMV), 148-168 (VIYG…LAGI), and 184-204 (LGIT…FSGI).

Belongs to the NqrDE/RnfAE family. In terms of assembly, composed of six subunits; NqrA, NqrB, NqrC, NqrD, NqrE and NqrF.

It is found in the cell inner membrane. The catalysed reaction is a ubiquinone + n Na(+)(in) + NADH + H(+) = a ubiquinol + n Na(+)(out) + NAD(+). In terms of biological role, NQR complex catalyzes the reduction of ubiquinone-1 to ubiquinol by two successive reactions, coupled with the transport of Na(+) ions from the cytoplasm to the periplasm. NqrA to NqrE are probably involved in the second step, the conversion of ubisemiquinone to ubiquinol. This chain is Na(+)-translocating NADH-quinone reductase subunit E, found in Chromohalobacter salexigens (strain ATCC BAA-138 / DSM 3043 / CIP 106854 / NCIMB 13768 / 1H11).